A 252-amino-acid chain; its full sequence is Probable transcriptional regulatory protein Cagg_2594 (252 aa).

The segment covering 1-14 has biased composition (basic residues); the sequence is MSGHSKWHTIRRAK. The segment at 1 to 22 is disordered; that stretch reads MSGHSKWHTIRRAKSANDQRRG.

The protein belongs to the TACO1 family.

The protein localises to the cytoplasm. In Chloroflexus aggregans (strain MD-66 / DSM 9485), this protein is Probable transcriptional regulatory protein Cagg_2594.